Reading from the N-terminus, the 155-residue chain is Endoribonuclease YbeY (155 aa).

H114, H118, and H124 together coordinate Zn(2+).

The protein belongs to the endoribonuclease YbeY family. It depends on Zn(2+) as a cofactor.

It localises to the cytoplasm. In terms of biological role, single strand-specific metallo-endoribonuclease involved in late-stage 70S ribosome quality control and in maturation of the 3' terminus of the 16S rRNA. The chain is Endoribonuclease YbeY from Escherichia coli O17:K52:H18 (strain UMN026 / ExPEC).